The primary structure comprises 414 residues: Serine hydroxymethyltransferase (414 aa).

(6S)-5,6,7,8-tetrahydrofolate contacts are provided by residues Leu117 and 121 to 123 (GHL). The residue at position 226 (Lys226) is an N6-(pyridoxal phosphate)lysine.

It belongs to the SHMT family. In terms of assembly, homodimer. The cofactor is pyridoxal 5'-phosphate.

The protein resides in the cytoplasm. It carries out the reaction (6R)-5,10-methylene-5,6,7,8-tetrahydrofolate + glycine + H2O = (6S)-5,6,7,8-tetrahydrofolate + L-serine. It participates in one-carbon metabolism; tetrahydrofolate interconversion. Its pathway is amino-acid biosynthesis; glycine biosynthesis; glycine from L-serine: step 1/1. Functionally, catalyzes the reversible interconversion of serine and glycine with tetrahydrofolate (THF) serving as the one-carbon carrier. This reaction serves as the major source of one-carbon groups required for the biosynthesis of purines, thymidylate, methionine, and other important biomolecules. Also exhibits THF-independent aldolase activity toward beta-hydroxyamino acids, producing glycine and aldehydes, via a retro-aldol mechanism. The protein is Serine hydroxymethyltransferase of Dictyoglomus turgidum (strain DSM 6724 / Z-1310).